We begin with the raw amino-acid sequence, 94 residues long: Integration host factor subunit beta (94 aa).

It belongs to the bacterial histone-like protein family. Heterodimer of an alpha and a beta chain.

This protein is one of the two subunits of integration host factor, a specific DNA-binding protein that functions in genetic recombination as well as in transcriptional and translational control. This is Integration host factor subunit beta (ihfB) from Serratia marcescens.